A 168-amino-acid polypeptide reads, in one-letter code: CASP-like protein 1U1 (168 aa).

At 1-6 the chain is on the cytoplasmic side; that stretch reads MDGAAR. Residues 7-27 traverse the membrane as a helical segment; it reads AVSLFFRIAVVGLSVAAAVVM. The Extracellular segment spans residues 28–49; that stretch reads ATASQAFPFNYGGAVSYTKYPA. A helical membrane pass occupies residues 50-70; that stretch reads FVYFVVAAVVSAVCSAAALYL. The Cytoplasmic segment spans residues 71–80; sequence SVVREAAAGW. The helical transmembrane segment at 81-101 threads the bilayer; that stretch reads AVALLDVVTMGLLFSAAGAVF. Residues 102-138 lie on the Extracellular side of the membrane; it reads AVRRMAPLYLGVAGADTVAGRWVNGEFCHAAGAFCWR. The helical transmembrane segment at 139 to 159 threads the bilayer; that stretch reads VTTSAIICAFAAAAVSVAVLT. Topologically, residues 160 to 168 are cytoplasmic; the sequence is KGARHRGKH.

It belongs to the Casparian strip membrane proteins (CASP) family. As to quaternary structure, homodimer and heterodimers.

It is found in the cell membrane. The sequence is that of CASP-like protein 1U1 from Oryza sativa subsp. japonica (Rice).